Here is a 237-residue protein sequence, read N- to C-terminus: 1-(5-phosphoribosyl)-5-[(5-phosphoribosylamino)methylideneamino] imidazole-4-carboxamide isomerase (237 aa).

The active-site Proton acceptor is Asp-8. The Proton donor role is filled by Asp-129.

The protein belongs to the HisA/HisF family.

The protein localises to the cytoplasm. It catalyses the reaction 1-(5-phospho-beta-D-ribosyl)-5-[(5-phospho-beta-D-ribosylamino)methylideneamino]imidazole-4-carboxamide = 5-[(5-phospho-1-deoxy-D-ribulos-1-ylimino)methylamino]-1-(5-phospho-beta-D-ribosyl)imidazole-4-carboxamide. It functions in the pathway amino-acid biosynthesis; L-histidine biosynthesis; L-histidine from 5-phospho-alpha-D-ribose 1-diphosphate: step 4/9. The sequence is that of 1-(5-phosphoribosyl)-5-[(5-phosphoribosylamino)methylideneamino] imidazole-4-carboxamide isomerase from Acetivibrio thermocellus (strain ATCC 27405 / DSM 1237 / JCM 9322 / NBRC 103400 / NCIMB 10682 / NRRL B-4536 / VPI 7372) (Clostridium thermocellum).